Consider the following 494-residue polypeptide: Glutamyl-tRNA(Gln) amidotransferase subunit A (494 aa).

Residues K79 and S159 each act as charge relay system in the active site. S183 (acyl-ester intermediate) is an active-site residue.

It belongs to the amidase family. GatA subfamily. In terms of assembly, heterotrimer of A, B and C subunits.

It catalyses the reaction L-glutamyl-tRNA(Gln) + L-glutamine + ATP + H2O = L-glutaminyl-tRNA(Gln) + L-glutamate + ADP + phosphate + H(+). In terms of biological role, allows the formation of correctly charged Gln-tRNA(Gln) through the transamidation of misacylated Glu-tRNA(Gln) in organisms which lack glutaminyl-tRNA synthetase. The reaction takes place in the presence of glutamine and ATP through an activated gamma-phospho-Glu-tRNA(Gln). The chain is Glutamyl-tRNA(Gln) amidotransferase subunit A from Bartonella tribocorum (strain CIP 105476 / IBS 506).